The sequence spans 269 residues: Protein LNK3 (269 aa).

As to quaternary structure, interacts with REV8.

Functionally, probable transcriptional coactivator. The chain is Protein LNK3 from Arabidopsis thaliana (Mouse-ear cress).